The chain runs to 270 residues: 1-deoxy-11-beta-hydroxypentalenate dehydrogenase (270 aa).

Residue 12–36 (GAASGIGFALSARLAQAGARVVMTD) participates in NAD(+) binding. Ser144 provides a ligand contact to substrate. Tyr157 (proton acceptor) is an active-site residue. Lys161 contacts NAD(+).

Belongs to the short-chain dehydrogenases/reductases (SDR) family.

The enzyme catalyses 1-deoxy-11beta-hydroxypentalenate + NAD(+) = 1-deoxy-11-oxopentalenate + NADH + H(+). It participates in antibiotic biosynthesis; neopentalenolactone biosynthesis. Catalyzes the oxidation of 1-deoxy-11-beta-hydroxypentalenic acid to 1-deoxy-11-oxopentalenic acid in the biosynthesis of neopentalenolactone antibiotic. In Streptomyces avermitilis (strain ATCC 31267 / DSM 46492 / JCM 5070 / NBRC 14893 / NCIMB 12804 / NRRL 8165 / MA-4680), this protein is 1-deoxy-11-beta-hydroxypentalenate dehydrogenase (ptlF).